Consider the following 334-residue polypeptide: Zinc-finger homeodomain protein 10 (334 aa).

Residues 1–15 (MMDMTPTITTTTTPT) are compositionally biased toward low complexity. 2 disordered regions span residues 1 to 33 (MMDM…QPAK) and 103 to 164 (FHRR…LLSL). The ZF-HD dimerization-type; degenerate zinc finger occupies 56–107 (YKECLKNHAAALGGHALDGCGEFMPSPSSISSDPTSLKCAACGCHRNFHRRD). Residues 136 to 155 (PPPPPPPPPRSPNSASPPPI) show a composition bias toward pro residues. The homeobox DNA-binding region spans 200-263 (RKRFRTKFSQ…NNKNTFNRRD (64 aa)). The segment at 292-334 (NGHHGVGGGGELHQSVSSGGGGGGFDSDSGGANGGNVNGSSSS) is disordered. Over residues 309–328 (SGGGGGGFDSDSGGANGGNV) the composition is skewed to gly residues.

Homo- and heterodimer with other ZFHD proteins. Interacts with MIF1, MIF2 and MIF3; these interactions prevent nuclear localization and DNA-binding to inhibit transcription regulation activity. Binds to ZHD1, ZHD2, ZHD4, ZHD5, ZHD6, ZHD7 and ZHD8. Interacts with KIN10 and KIN11. In terms of tissue distribution, mostly expressed in rosettes (e.g. young leaves), flowers (e.g. styles), siliques and inflorescence.

The protein resides in the nucleus. Functionally, putative transcription factor. Probably involved in establishing polarity during leaf development through the gibberellic acid (GA) signaling pathway. In Arabidopsis thaliana (Mouse-ear cress), this protein is Zinc-finger homeodomain protein 10 (ZHD10).